A 161-amino-acid polypeptide reads, in one-letter code: Ribosome maturation factor RimP (161 aa).

Belongs to the RimP family.

It is found in the cytoplasm. Required for maturation of 30S ribosomal subunits. The sequence is that of Ribosome maturation factor RimP from Pelobacter propionicus (strain DSM 2379 / NBRC 103807 / OttBd1).